Here is a 251-residue protein sequence, read N- to C-terminus: NADH-quinone oxidoreductase subunit B (251 aa).

Residues C38, C39, C104, and C134 each coordinate [4Fe-4S] cluster. The disordered stretch occupies residues 208–251 (RKGLPPGSMTDVGWIPPEARERLKAGRGAGASGSGEREEGKEGA). The segment covering 242 to 251 (GEREEGKEGA) has biased composition (basic and acidic residues).

Belongs to the complex I 20 kDa subunit family. In terms of assembly, NDH-1 is composed of 14 different subunits. Subunits NuoB, C, D, E, F, and G constitute the peripheral sector of the complex. [4Fe-4S] cluster is required as a cofactor.

The protein localises to the cell membrane. It carries out the reaction a quinone + NADH + 5 H(+)(in) = a quinol + NAD(+) + 4 H(+)(out). Its function is as follows. NDH-1 shuttles electrons from NADH, via FMN and iron-sulfur (Fe-S) centers, to quinones in the respiratory chain. The immediate electron acceptor for the enzyme in this species is believed to be a menaquinone. Couples the redox reaction to proton translocation (for every two electrons transferred, four hydrogen ions are translocated across the cytoplasmic membrane), and thus conserves the redox energy in a proton gradient. This chain is NADH-quinone oxidoreductase subunit B, found in Rubrobacter xylanophilus (strain DSM 9941 / JCM 11954 / NBRC 16129 / PRD-1).